Consider the following 189-residue polypeptide: Elongation factor P (189 aa).

It belongs to the elongation factor P family.

It localises to the cytoplasm. It functions in the pathway protein biosynthesis; polypeptide chain elongation. Involved in peptide bond synthesis. Stimulates efficient translation and peptide-bond synthesis on native or reconstituted 70S ribosomes in vitro. Probably functions indirectly by altering the affinity of the ribosome for aminoacyl-tRNA, thus increasing their reactivity as acceptors for peptidyl transferase. This is Elongation factor P from Rhizobium meliloti (strain 1021) (Ensifer meliloti).